The sequence spans 760 residues: BMP/retinoic acid-inducible neural-specific protein 1 (760 aa).

Positions 1–16 are cleaved as a signal peptide; sequence MNWRFVELLYFLFVWG. The MACPF domain maps to 68–251; that stretch reads RYKIYREFAR…FVQSALSYIM (184 aa). Asparagine 156, asparagine 433, asparagine 443, asparagine 553, asparagine 599, asparagine 630, and asparagine 676 each carry an N-linked (GlcNAc...) asparagine glycan.

The protein belongs to the BRINP family.

The protein localises to the cytoplasm. Its function is as follows. Plays a role in neurogenesis and brain development. May suppress cell cycle progression in postmitotic neurons by inhibiting G1/S transition. The sequence is that of BMP/retinoic acid-inducible neural-specific protein 1 (Brinp1) from Rattus norvegicus (Rat).